Here is an 860-residue protein sequence, read N- to C-terminus: Protein argonaute-2 (860 aa).

The tract at residues 1–30 (MYSGAGPALAPPAPPPPPIQGYAFKPPPRP) is disordered. Residue Tyr2 is modified to 3'-nitrotyrosine. Residues 9–30 (LAPPAPPPPPIQGYAFKPPPRP) show a composition bias toward pro residues. The 120-residue stretch at 230 to 349 (PVIEFVCEVL…LPLEVCNIVA (120 aa)) folds into the PAZ domain. The segment at 312 to 317 (YFKDRH) is interaction with guide RNA. Residue Ser388 is modified to Phosphoserine. One can recognise a Piwi domain in the interval 518 to 819 (LVVVILPGKT…VAFRARYHLV (302 aa)). Positions 525–567 (GKTPVYAEVKRVGDTVLGMATQCVQMKNVQRTTPQTLSNLWLK) are interaction with guide RNA. Residues 588-591 (FQQP) are interaction with GW182 family members. Asp598 serves as a coordination point for a divalent metal cation. The segment at 651-661 (LIQFYKSTRFK) is interaction with GW182 family members. Asp670 is an a divalent metal cation binding site. A 4-hydroxyproline modification is found at Pro701. Interaction with guide RNA stretches follow at residues 710–711 (KR), 754–762 (HAGIQGTSR), and 791–813 (YVRCTRSVSIPAPAYYAHLVAFR). His808 contacts a divalent metal cation. Phosphoserine is present on residues Ser825, Ser829, Ser832, and Ser835.

This sequence belongs to the argonaute family. Ago subfamily. As to quaternary structure, interacts with DICER1 through its Piwi domain and with TARBP2 during assembly of the RNA-induced silencing complex (RISC). Together, DICER1, AGO2 and TARBP2 constitute the trimeric RISC loading complex (RLC), or micro-RNA (miRNA) loading complex (miRLC). Within the RLC/miRLC, DICER1 and TARBP2 are required to process precursor miRNAs (pre-miRNAs) to mature miRNAs and then load them onto AGO2. AGO2 bound to the mature miRNA constitutes the minimal RISC and may subsequently dissociate from DICER1 and TARBP2. Note however that the term RISC has also been used to describe the trimeric RLC/miRLC. The formation of RISC complexes containing siRNAs rather than miRNAs appears to occur independently of DICER1. Interacts with AGO1. Also interacts with DDB1, DDX5, DDX6, DDX20, DHX30, DHX36, DDX47, DHX9, ELAVL, FXR1, GEMIN4, HNRNPF, IGF2BP1, ILF3, IMP8, MATR3, PABPC1, PRMT5, P4HA1, P4HB, RBM4, SART3, TNRC6A, TNRC6B, UPF1 and YBX1. Interacts with the P-body components DCP1A and XRN1. Associates with polysomes and messenger ribonucleoproteins (mNRPs). Interacts with RBM4; the interaction is modulated under stress-induced conditions, occurs under both cell proliferation and differentiation conditions and in an RNA- and phosphorylation-independent manner. Interacts with LIMD1, WTIP and AJUBA. Interacts with TRIM71; the interaction increases in presence of RNA. Interacts with APOBEC3G in an RNA-dependent manner. Interacts with APOBEC3A, APOBEC3C, APOBEC3F and APOBEC3H. Interacts with DICER1, TARBP2, EIF6, MOV10 and RPL7A (60S ribosome subunit); they form a large RNA-induced silencing complex (RISC). Interacts with FMR1. Interacts with ZFP36. Interacts with RC3H1; the interaction is RNA independent. Found in a complex composed of AGO2, CHD7 and ARB2A. Interacts with SND1 and SYT11. Interacts with CLNK. Interacts with GARRE1. Interacts with GRB2; this interaction is important for the formation of a ternary complex containing GRB2, AGO2 and DICER1. It depends on Mg(2+) as a cofactor. Mn(2+) is required as a cofactor. In terms of processing, hydroxylated. 4-hydroxylation appears to enhance protein stability but is not required for miRNA-binding or endonuclease activity. Post-translationally, ubiquitinated on surface-exposed lysines by a SCF-like E3 ubiquitin-protein ligase complex containing ZSWIM8 during target-directed microRNA degradation (TDMD), a process that mediates degradation of microRNAs (miRNAs). Ubiquitination by the SCF-like E3 ubiquitin-protein ligase complex containing ZSWIM8 leads to its subsequent degradation, thereby exposing miRNAs for degradation. ZSWIM8 recognizes and binds AGO2 when it is engaged with a TDMD target. Phosphorylation at Ser-388 by AKT3; leads to up-regulate translational repression of microRNA target and down-regulate endonucleolytic cleavage. In terms of processing, a phosphorylation cycle of C-terminal serine cluster (Ser-825-Ser-835) regulates the release of target mRNAs. Target-binding leads to phosphorylation of these residues by CSNK1A1, which reduces the affinity of AGO2 for mRNA and enables target release. The ANKRD52-PPP6C phosphatase complex dephosphorylates the residues, which primes AGO2 for binding a new target.

The protein resides in the cytoplasm. It localises to the P-body. Its subcellular location is the nucleus. It catalyses the reaction Endonucleolytic cleavage to 5'-phosphomonoester.. Its function is as follows. Required for RNA-mediated gene silencing (RNAi) by the RNA-induced silencing complex (RISC). The 'minimal RISC' appears to include AGO2 bound to a short guide RNA such as a microRNA (miRNA) or short interfering RNA (siRNA). These guide RNAs direct RISC to complementary mRNAs that are targets for RISC-mediated gene silencing. The precise mechanism of gene silencing depends on the degree of complementarity between the miRNA or siRNA and its target. Binding of RISC to a perfectly complementary mRNA generally results in silencing due to endonucleolytic cleavage of the mRNA specifically by AGO2. Binding of RISC to a partially complementary mRNA results in silencing through inhibition of translation, and this is independent of endonuclease activity. May inhibit translation initiation by binding to the 7-methylguanosine cap, thereby preventing the recruitment of the translation initiation factor eIF4-E. May also inhibit translation initiation via interaction with EIF6, which itself binds to the 60S ribosomal subunit and prevents its association with the 40S ribosomal subunit. The inhibition of translational initiation leads to the accumulation of the affected mRNA in cytoplasmic processing bodies (P-bodies), where mRNA degradation may subsequently occur. In some cases RISC-mediated translational repression is also observed for miRNAs that perfectly match the 3' untranslated region (3'-UTR). Can also up-regulate the translation of specific mRNAs under certain growth conditions. Binds to the AU element of the 3'-UTR of the TNF (TNF-alpha) mRNA and up-regulates translation under conditions of serum starvation. Also required for transcriptional gene silencing (TGS), in which short RNAs known as antigene RNAs or agRNAs direct the transcriptional repression of complementary promoter regions. The protein is Protein argonaute-2 (AGO2) of Bos taurus (Bovine).